Consider the following 123-residue polypeptide: Holo-[acyl-carrier-protein] synthase (123 aa).

The Mg(2+) site is built by Asp8 and Glu60.

This sequence belongs to the P-Pant transferase superfamily. AcpS family. Requires Mg(2+) as cofactor.

The protein localises to the cytoplasm. The enzyme catalyses apo-[ACP] + CoA = holo-[ACP] + adenosine 3',5'-bisphosphate + H(+). Functionally, transfers the 4'-phosphopantetheine moiety from coenzyme A to a Ser of acyl-carrier-protein. This chain is Holo-[acyl-carrier-protein] synthase, found in Ehrlichia ruminantium (strain Welgevonden).